A 577-amino-acid chain; its full sequence is Acyl-coenzyme A synthetase ACSM1, mitochondrial (577 aa).

The N-terminal 31 residues, 1–31, are a transit peptide targeting the mitochondrion; it reads MQWLMRFRTLWGIHKSFHNIHPAPSQLRCRS. Lys-85 carries the N6-succinyllysine modification. Lys-146 is modified (N6-acetyllysine; alternate). Lys-146 bears the N6-succinyllysine; alternate mark. Lys-183 is subject to N6-succinyllysine. Lys-204 bears the N6-acetyllysine; alternate mark. Lys-204 bears the N6-succinyllysine; alternate mark. Lys-214 bears the N6-acetyllysine mark. 226 to 234 contributes to the ATP binding site; it reads TSGTTGFPK. Residue Lys-237 is modified to N6-succinyllysine. N6-acetyllysine; alternate is present on residues Lys-356 and Lys-391. N6-succinyllysine; alternate is present on residues Lys-356 and Lys-391. ATP is bound by residues Asp-452 and Arg-467. An N6-acetyllysine modification is found at Lys-531. Lys-538 is subject to N6-acetyllysine; alternate. Lys-538 carries the N6-succinyllysine; alternate modification. Lys-549 carries the post-translational modification N6-acetyllysine. Lys-563 contacts ATP.

It belongs to the ATP-dependent AMP-binding enzyme family. Monomer. It depends on Mg(2+) as a cofactor. Requires Mn(2+) as cofactor.

It localises to the mitochondrion matrix. The protein localises to the mitochondrion. It carries out the reaction a medium-chain fatty acid + ATP + CoA = a medium-chain fatty acyl-CoA + AMP + diphosphate. The catalysed reaction is benzoate + ATP + CoA = benzoyl-CoA + AMP + diphosphate. It catalyses the reaction (R)-lipoate + GTP + H(+) = (R)-lipoyl-GMP + diphosphate. The enzyme catalyses octanoate + ATP + CoA = octanoyl-CoA + AMP + diphosphate. It carries out the reaction decanoate + ATP + CoA = decanoyl-CoA + AMP + diphosphate. The catalysed reaction is dodecanoate + ATP + CoA = dodecanoyl-CoA + AMP + diphosphate. It catalyses the reaction tetradecanoate + ATP + CoA = tetradecanoyl-CoA + AMP + diphosphate. The enzyme catalyses hexanoate + ATP + CoA = hexanoyl-CoA + AMP + diphosphate. It carries out the reaction butanoate + ATP + CoA = butanoyl-CoA + AMP + diphosphate. The catalysed reaction is hexadecanoate + ATP + CoA = hexadecanoyl-CoA + AMP + diphosphate. Activated by monovalent cations, such as potassium, rubidium or ammonium. In terms of biological role, catalyzes the activation of fatty acids by CoA to produce an acyl-CoA, the first step in fatty acid metabolism. Capable of activating medium-chain fatty acids (e.g. butyric (C4) to decanoic (C10) acids), and certain carboxylate-containing xenobiotics, e.g. benzoate. Also catalyzes the activation of lipoate to lipoyl-nucleoside monophosphate. Activates lipoate with GTP at a 1000-fold higher rate than with ATP and activates both (R)- and (S)-lipoate to the respective lipoyl-GMP, with a preference for (R)-lipoate. This is Acyl-coenzyme A synthetase ACSM1, mitochondrial (ACSM1) from Homo sapiens (Human).